We begin with the raw amino-acid sequence, 251 residues long: uncharacterized protein (251 aa).

Residue 12 to 21 (TGASSQGDIG) coordinates NADP(+). Ser-148 lines the substrate pocket. The active-site Proton acceptor is the Tyr-161.

Belongs to the short-chain dehydrogenases/reductases (SDR) family.

This is an uncharacterized protein from Bacillus subtilis (strain 168).